A 120-amino-acid polypeptide reads, in one-letter code: Seripauperin-8 (120 aa).

The N-terminal stretch at 1 to 20 (MVKLTSIAAGVAAIAATASA) is a signal peptide.

It belongs to the SRP1/TIP1 family. Seripauperin subfamily.

The sequence is that of Seripauperin-8 (PAU8) from Saccharomyces cerevisiae (strain ATCC 204508 / S288c) (Baker's yeast).